The sequence spans 318 residues: MAPESLVEVPGCNCFWYLGVLAAAWWGLRAACCLLNGARAWVLGSGAQVGPRIGKWAVVTGATDGIGKAYAEELARRGMSIVLISRSPEKLDEAAKHIKETFKVETKIIAADFGKPTEIYERIEAGLRDLEIGVLVNNVGVSYEYPEYFLEIPDLENTLDKMININIMSVCQMTRLVLPGMLGRGKGVILNISSASGMYPVPLLTVYSATKAFVDFFSRGLHAEYRNKGINVQSVLPFYVATKLAKIRKPTWDKPSPETYVRSAVNTVGLQTQTNGYLPHAIMGWISTSLVPVSVAISMGMKMNKGLRSRFLKRKKQK.

Residues Phe-15–Leu-35 traverse the membrane as a helical segment. NADP(+) is bound at residue Gly-54–Leu-83. Helical transmembrane passes span Gly-187 to Tyr-207 and Ala-281 to Met-301. Ser-194 contributes to the substrate binding site. Tyr-207 serves as the catalytic Proton acceptor.

The protein belongs to the short-chain dehydrogenases/reductases (SDR) family. 17-beta-HSD 3 subfamily.

It localises to the endoplasmic reticulum membrane. It catalyses the reaction a very-long-chain (3R)-3-hydroxyacyl-CoA + NADP(+) = a very-long-chain 3-oxoacyl-CoA + NADPH + H(+). The enzyme catalyses 17beta-estradiol + NAD(+) = estrone + NADH + H(+). The catalysed reaction is 17beta-estradiol + NADP(+) = estrone + NADPH + H(+). The protein operates within lipid metabolism; fatty acid biosynthesis. Its pathway is steroid biosynthesis; estrogen biosynthesis. Functionally, catalyzes the second of the four reactions of the long-chain fatty acids elongation cycle. This endoplasmic reticulum-bound enzymatic process, allows the addition of two carbons to the chain of long- and very long-chain fatty acids/VLCFAs per cycle. This enzyme has a 3-ketoacyl-CoA reductase activity, reducing 3-ketoacyl-CoA to 3-hydroxyacyl-CoA, within each cycle of fatty acid elongation. Thereby, it may participate in the production of VLCFAs of different chain lengths that are involved in multiple biological processes as precursors of membrane lipids and lipid mediators. May also catalyze the transformation of estrone (E1) into estradiol (E2) and play a role in estrogen formation. The chain is Very-long-chain 3-oxoacyl-CoA reductase-A (hsd17b12-a) from Xenopus laevis (African clawed frog).